A 271-amino-acid chain; its full sequence is Protein CDV3 homolog (271 aa).

Basic and acidic residues predominate over residues 37–47 (KREVVKPKKPE). Disordered regions lie at residues 37–151 (KREV…GHGP) and 186–271 (SQQA…DEAS). A compositionally biased stretch (low complexity) spans 48–61 (VAAGGVAVVGENEN). A compositionally biased stretch (acidic residues) spans 73-82 (VEEEWKEFEE). A compositionally biased stretch (polar residues) spans 95–114 (QLSTISSARSRTAQESSESQ). Serine 134 carries the phosphoserine modification. The segment covering 224–242 (RPEEQRKKKNEPAFEEVRH) has biased composition (basic and acidic residues).

It belongs to the CDV3 family.

The polypeptide is Protein CDV3 homolog (Drosophila melanogaster (Fruit fly)).